The following is a 447-amino-acid chain: Exodeoxyribonuclease 7 large subunit (447 aa).

It belongs to the XseA family. In terms of assembly, heterooligomer composed of large and small subunits.

Its subcellular location is the cytoplasm. The enzyme catalyses Exonucleolytic cleavage in either 5'- to 3'- or 3'- to 5'-direction to yield nucleoside 5'-phosphates.. Bidirectionally degrades single-stranded DNA into large acid-insoluble oligonucleotides, which are then degraded further into small acid-soluble oligonucleotides. In Pediococcus pentosaceus (strain ATCC 25745 / CCUG 21536 / LMG 10740 / 183-1w), this protein is Exodeoxyribonuclease 7 large subunit.